The following is a 136-amino-acid chain: Protein NrdI (136 aa).

This sequence belongs to the NrdI family.

In terms of biological role, probably involved in ribonucleotide reductase function. This Escherichia coli O7:K1 (strain IAI39 / ExPEC) protein is Protein NrdI.